A 375-amino-acid chain; its full sequence is Succinyl-diaminopimelate desuccinylase (375 aa).

Histidine 66 contacts Zn(2+). The active site involves aspartate 68. Aspartate 99 provides a ligand contact to Zn(2+). The active-site Proton acceptor is glutamate 133. The Zn(2+) site is built by glutamate 134, glutamate 162, and histidine 348.

The protein belongs to the peptidase M20A family. DapE subfamily. In terms of assembly, homodimer. Zn(2+) is required as a cofactor. Co(2+) serves as cofactor.

The catalysed reaction is N-succinyl-(2S,6S)-2,6-diaminopimelate + H2O = (2S,6S)-2,6-diaminopimelate + succinate. It functions in the pathway amino-acid biosynthesis; L-lysine biosynthesis via DAP pathway; LL-2,6-diaminopimelate from (S)-tetrahydrodipicolinate (succinylase route): step 3/3. Its function is as follows. Catalyzes the hydrolysis of N-succinyl-L,L-diaminopimelic acid (SDAP), forming succinate and LL-2,6-diaminopimelate (DAP), an intermediate involved in the bacterial biosynthesis of lysine and meso-diaminopimelic acid, an essential component of bacterial cell walls. In Salmonella typhi, this protein is Succinyl-diaminopimelate desuccinylase.